The chain runs to 130 residues: Small ribosomal subunit protein uS8 (130 aa).

This sequence belongs to the universal ribosomal protein uS8 family. As to quaternary structure, part of the 30S ribosomal subunit. Contacts proteins S5 and S12.

Functionally, one of the primary rRNA binding proteins, it binds directly to 16S rRNA central domain where it helps coordinate assembly of the platform of the 30S subunit. The protein is Small ribosomal subunit protein uS8 of Vibrio campbellii (strain ATCC BAA-1116).